Reading from the N-terminus, the 310-residue chain is tRNA uridine(34) hydroxylase (310 aa).

A Rhodanese domain is found at 127–225; that stretch reads KDKDTIVIDT…YLEDISKEES (99 aa). Cys-185 serves as the catalytic Cysteine persulfide intermediate.

This sequence belongs to the TrhO family.

The enzyme catalyses uridine(34) in tRNA + AH2 + O2 = 5-hydroxyuridine(34) in tRNA + A + H2O. Functionally, catalyzes oxygen-dependent 5-hydroxyuridine (ho5U) modification at position 34 in tRNAs. This Prochlorococcus marinus (strain MIT 9515) protein is tRNA uridine(34) hydroxylase.